A 180-amino-acid polypeptide reads, in one-letter code: Translation initiation factor IF-3 (180 aa).

Belongs to the IF-3 family. Monomer.

The protein localises to the cytoplasm. In terms of biological role, IF-3 binds to the 30S ribosomal subunit and shifts the equilibrium between 70S ribosomes and their 50S and 30S subunits in favor of the free subunits, thus enhancing the availability of 30S subunits on which protein synthesis initiation begins. The protein is Translation initiation factor IF-3 of Pectobacterium atrosepticum (strain SCRI 1043 / ATCC BAA-672) (Erwinia carotovora subsp. atroseptica).